The sequence spans 405 residues: GTPase Obg (405 aa).

In terms of domain architecture, Obg spans 1–159 (MRFIDEAVVT…KVLKFELKVV (159 aa)). The 174-residue stretch at 160 to 333 (ADVGLIGLPN…IKYHLMNEIE (174 aa)) folds into the OBG-type G domain. GTP is bound by residues 166–173 (GLPNAGKS), 191–195 (FTTLV), 213–216 (DIPG), 283–286 (NKID), and 314–316 (ATL). Positions 173 and 193 each coordinate Mg(2+). Basic and acidic residues predominate over residues 371–382 (YRAARKAAREGT). A disordered region spans residues 371–405 (YRAARKAAREGTDLSDDDFDGSDDDDDGVEVIYAP). The segment covering 383–399 (DLSDDDFDGSDDDDDGV) has biased composition (acidic residues).

This sequence belongs to the TRAFAC class OBG-HflX-like GTPase superfamily. OBG GTPase family. As to quaternary structure, monomer. Requires Mg(2+) as cofactor.

Its subcellular location is the cytoplasm. In terms of biological role, an essential GTPase which binds GTP, GDP and possibly (p)ppGpp with moderate affinity, with high nucleotide exchange rates and a fairly low GTP hydrolysis rate. Plays a role in control of the cell cycle, stress response, ribosome biogenesis and in those bacteria that undergo differentiation, in morphogenesis control. This chain is GTPase Obg, found in Psychrobacter arcticus (strain DSM 17307 / VKM B-2377 / 273-4).